Reading from the N-terminus, the 441-residue chain is Deoxyguanosinetriphosphate triphosphohydrolase-like protein (441 aa).

The interval M1–R27 is disordered. A compositionally biased stretch (basic and acidic residues) spans Q7–R27. An HD domain is found at R59–A252.

The protein belongs to the dGTPase family. Type 2 subfamily.

This is Deoxyguanosinetriphosphate triphosphohydrolase-like protein from Shewanella oneidensis (strain ATCC 700550 / JCM 31522 / CIP 106686 / LMG 19005 / NCIMB 14063 / MR-1).